The primary structure comprises 371 residues: dTDP-4-amino-4,6-dideoxy-D-glucose transaminase (371 aa).

K186 is subject to N6-(pyridoxal phosphate)lysine.

Belongs to the DegT/DnrJ/EryC1 family. Pyridoxal 5'-phosphate is required as a cofactor.

It carries out the reaction dTDP-4-amino-4,6-dideoxy-D-glucose + 2-oxoglutarate = dTDP-4-dehydro-6-deoxy-alpha-D-glucose + L-glutamate. Its pathway is bacterial outer membrane biogenesis; lipopolysaccharide biosynthesis. Catalyzes the conversion of dTDP-4-dehydro-6-deoxy-D-glucose (dTDP-D-Glc4O) to dTDP-4-amino-4,6-dideoxy-D-glucose (dTDP-D-Qui4N). The sequence is that of dTDP-4-amino-4,6-dideoxy-D-glucose transaminase (vioA) from Escherichia coli.